The sequence spans 300 residues: 33 kDa chaperonin (300 aa).

Disulfide bonds link Cys235/Cys237 and Cys269/Cys272.

The protein belongs to the HSP33 family. In terms of processing, under oxidizing conditions two disulfide bonds are formed involving the reactive cysteines. Under reducing conditions zinc is bound to the reactive cysteines and the protein is inactive.

The protein resides in the cytoplasm. Functionally, redox regulated molecular chaperone. Protects both thermally unfolding and oxidatively damaged proteins from irreversible aggregation. Plays an important role in the bacterial defense system toward oxidative stress. This is 33 kDa chaperonin from Pseudomonas fluorescens (strain SBW25).